We begin with the raw amino-acid sequence, 185 residues long: uncharacterized protein (185 aa).

Met-1 carries the N-acetylmethionine modification. 3 stretches are compositionally biased toward basic and acidic residues: residues 1–18 (MDAF…QDKQ), 26–47 (TPSD…TTEE), and 59–71 (SNED…PVLE). Disordered stretches follow at residues 1–71 (MDAF…PVLE) and 155–185 (DHDR…DGLL). The segment covering 170–185 (LPEELETDQDFLDGLL) has biased composition (acidic residues).

This is an uncharacterized protein from Saccharomyces cerevisiae (strain ATCC 204508 / S288c) (Baker's yeast).